The primary structure comprises 570 residues: Sulfite reductase [NADPH] hemoprotein beta-component (570 aa).

Positions 434, 440, 479, and 483 each coordinate [4Fe-4S] cluster. C483 lines the siroheme pocket.

The protein belongs to the nitrite and sulfite reductase 4Fe-4S domain family. Alpha(8)-beta(8). The alpha component is a flavoprotein, the beta component is a hemoprotein. Siroheme is required as a cofactor. The cofactor is [4Fe-4S] cluster.

The catalysed reaction is hydrogen sulfide + 3 NADP(+) + 3 H2O = sulfite + 3 NADPH + 4 H(+). It functions in the pathway sulfur metabolism; hydrogen sulfide biosynthesis; hydrogen sulfide from sulfite (NADPH route): step 1/1. Component of the sulfite reductase complex that catalyzes the 6-electron reduction of sulfite to sulfide. This is one of several activities required for the biosynthesis of L-cysteine from sulfate. In Shigella flexneri, this protein is Sulfite reductase [NADPH] hemoprotein beta-component.